Here is a 298-residue protein sequence, read N- to C-terminus: Apolipoprotein E (298 aa).

Residues 1–18 (MKVLWAALVVTLLAGCRA) form the signal peptide. A run of 8 repeats spans residues 74–94 (LLIE…EKEL), 95–116 (GPVA…QARL), 117–138 (GADM…QAML), 139–160 (GQSS…RKRL), 161–182 (QRDI…QEGA), 183–203 (ERGV…GRLQ), 204–221 (ALTS…GEQM), and 222–243 (RGRL…REQM). The interval 95-243 (GPVAEDTKAR…DRLEEVREQM (149 aa)) is 8 X 22 AA approximate tandem repeats. Met137 bears the Methionine sulfoxide mark. Ser141 carries the post-translational modification Phosphoserine. The interval 151–161 (SHLRKMRKRLQ) is LDL and other lipoprotein receptors binding. 155–158 (KMRK) provides a ligand contact to heparin. A lipid-binding and lipoprotein association region spans residues 203 to 271 (QALTSQPLQE…KSWFEPMMED (69 aa)). Residue 217–224 (WGEQMRGR) coordinates heparin. The segment at 259-271 (ARLKSWFEPMMED) is specificity for association with VLDL.

Belongs to the apolipoprotein A1/A4/E family. In terms of assembly, homotetramer. May interact with ABCA1; functionally associated with ABCA1 in the biogenesis of HDLs. May interact with APP/A4 amyloid-beta peptide; the interaction is extremely stable in vitro but its physiological significance is unclear. May interact with MAPT. May interact with MAP2. In the cerebrospinal fluid, interacts with secreted SORL1. Interacts with PMEL; this allows the loading of PMEL luminal fragment on ILVs to induce fibril nucleation. Post-translationally, APOE exists as multiple glycosylated and sialylated glycoforms within cells and in plasma. The extent of glycosylation and sialylation are tissue and context specific. Glycated in plasma VLDL. In terms of processing, phosphorylated by FAM20C in the extracellular medium.

It is found in the secreted. The protein resides in the extracellular space. The protein localises to the extracellular matrix. It localises to the extracellular vesicle. Its subcellular location is the endosome. It is found in the multivesicular body. APOE is an apolipoprotein, a protein associating with lipid particles, that mainly functions in lipoprotein-mediated lipid transport between organs via the plasma and interstitial fluids. APOE is a core component of plasma lipoproteins and is involved in their production, conversion and clearance. Apolipoproteins are amphipathic molecules that interact both with lipids of the lipoprotein particle core and the aqueous environment of the plasma. As such, APOE associates with chylomicrons, chylomicron remnants, very low density lipoproteins (VLDL) and intermediate density lipoproteins (IDL) but shows a preferential binding to high-density lipoproteins (HDL). It also binds a wide range of cellular receptors including the LDL receptor/LDLR, the LDL receptor-related proteins LRP1, LRP2 and LRP8 and the very low-density lipoprotein receptor/VLDLR that mediate the cellular uptake of the APOE-containing lipoprotein particles. Finally, APOE also has a heparin-binding activity and binds heparan-sulfate proteoglycans on the surface of cells, a property that supports the capture and the receptor-mediated uptake of APOE-containing lipoproteins by cells. A main function of APOE is to mediate lipoprotein clearance through the uptake of chylomicrons, VLDLs, and HDLs by hepatocytes. APOE is also involved in the biosynthesis by the liver of VLDLs as well as their uptake by peripheral tissues ensuring the delivery of triglycerides and energy storage in muscle, heart and adipose tissues. By participating in the lipoprotein-mediated distribution of lipids among tissues, APOE plays a critical role in plasma and tissues lipid homeostasis. APOE is also involved in two steps of reverse cholesterol transport, the HDLs-mediated transport of cholesterol from peripheral tissues to the liver, and thereby plays an important role in cholesterol homeostasis. First, it is functionally associated with ABCA1 in the biogenesis of HDLs in tissues. Second, it is enriched in circulating HDLs and mediates their uptake by hepatocytes. APOE also plays an important role in lipid transport in the central nervous system, regulating neuron survival and sprouting. In Cavia tschudii (Montane guinea pig), this protein is Apolipoprotein E (APOE).